Consider the following 156-residue polypeptide: Ribosomal RNA large subunit methyltransferase H (156 aa).

Residues leucine 73, glycine 104, and 123–128 (LSSLTL) contribute to the S-adenosyl-L-methionine site.

The protein belongs to the RNA methyltransferase RlmH family. In terms of assembly, homodimer.

It is found in the cytoplasm. The enzyme catalyses pseudouridine(1915) in 23S rRNA + S-adenosyl-L-methionine = N(3)-methylpseudouridine(1915) in 23S rRNA + S-adenosyl-L-homocysteine + H(+). In terms of biological role, specifically methylates the pseudouridine at position 1915 (m3Psi1915) in 23S rRNA. The sequence is that of Ribosomal RNA large subunit methyltransferase H from Bordetella bronchiseptica (strain ATCC BAA-588 / NCTC 13252 / RB50) (Alcaligenes bronchisepticus).